The following is a 375-amino-acid chain: Alcohol dehydrogenase 1 (375 aa).

The residue at position 2 (S2) is an N-acetylserine. C47, H68, C98, C101, C104, C112, and C175 together coordinate Zn(2+). Residues 200–205, D224, and K229 contribute to the NAD(+) site; that span reads WSGRVG. K234 is subject to N6-succinyllysine. Residue 293–295 coordinates NAD(+); sequence VGV. K340 bears the N6-succinyllysine mark. R370 is a binding site for NAD(+).

Belongs to the zinc-containing alcohol dehydrogenase family. Class-I subfamily. In terms of assembly, homodimer. The cofactor is Zn(2+).

It localises to the cytoplasm. It catalyses the reaction a primary alcohol + NAD(+) = an aldehyde + NADH + H(+). It carries out the reaction a secondary alcohol + NAD(+) = a ketone + NADH + H(+). The protein is Alcohol dehydrogenase 1 (ADH1) of Geomys attwateri (Attwater's pocket gopher).